Here is a 308-residue protein sequence, read N- to C-terminus: Olfactory receptor OR9H1 (308 aa).

Over 1–26 (MVNFTHVSEFVLLGFQGGPGMQAMLF) the chain is Extracellular. The chain crosses the membrane as a helical span at residues 27 to 47 (LIFLILYGIAVVGNLGMIVII). Topologically, residues 48 to 58 (WVDAHLHTPMY) are cytoplasmic. Residues 59–81 (AFLQSLSLLDICYSSTIAPRALA) form a helical membrane-spanning segment. The Extracellular segment spans residues 82-95 (NSMQEDHTISFGGC). An intrachain disulfide couples Cys-95 to Cys-177. A helical transmembrane segment spans residues 96-116 (AAQFFFLSLFGITEAFLLAAM). The Cytoplasmic segment spans residues 117 to 137 (AYDRFIAICNPLLYSVSMSHQ). The helical transmembrane segment at 138 to 158 (VCVLLISGSYLWGVVNAIAQT) threads the bilayer. At 159–203 (TMTFRLPFCGSNEINDFFCDVPPLLSLSCSDTFINQLVLLGLCGS) the chain is on the extracellular side. A helical transmembrane segment spans residues 204–224 (IIVSTFLIVLVSYIYIISTIL). The Cytoplasmic portion of the chain corresponds to 225–245 (RIPTMQGCQKAFSTCASHLTG). A helical membrane pass occupies residues 246-266 (VCLFFGTVFFMYAQPSAIFFM). Topologically, residues 267-269 (EQS) are extracellular. Residues 270 to 290 (KIVSIFYTMVIPMLNPLIYSL) traverse the membrane as a helical segment. Residues 291–308 (RNKEVKQALRRSMQKLSL) lie on the Cytoplasmic side of the membrane.

It belongs to the G-protein coupled receptor 1 family.

It localises to the cell membrane. Odorant receptor. This is Olfactory receptor OR9H1 from Homo sapiens (Human).